Consider the following 159-residue polypeptide: 2-C-methyl-D-erythritol 2,4-cyclodiphosphate synthase (159 aa).

The a divalent metal cation site is built by D8 and H10. Residues 8–10 (DVH) and 34–35 (HS) contribute to the 4-CDP-2-C-methyl-D-erythritol 2-phosphate site. H42 is an a divalent metal cation binding site. 4-CDP-2-C-methyl-D-erythritol 2-phosphate is bound by residues 56-58 (DIG), 61-65 (FPDTD), 100-106 (AQAPKML), 132-135 (TTTE), F139, and R142.

Belongs to the IspF family. Homotrimer. It depends on a divalent metal cation as a cofactor.

The enzyme catalyses 4-CDP-2-C-methyl-D-erythritol 2-phosphate = 2-C-methyl-D-erythritol 2,4-cyclic diphosphate + CMP. It participates in isoprenoid biosynthesis; isopentenyl diphosphate biosynthesis via DXP pathway; isopentenyl diphosphate from 1-deoxy-D-xylulose 5-phosphate: step 4/6. Functionally, involved in the biosynthesis of isopentenyl diphosphate (IPP) and dimethylallyl diphosphate (DMAPP), two major building blocks of isoprenoid compounds. Catalyzes the conversion of 4-diphosphocytidyl-2-C-methyl-D-erythritol 2-phosphate (CDP-ME2P) to 2-C-methyl-D-erythritol 2,4-cyclodiphosphate (ME-CPP) with a corresponding release of cytidine 5-monophosphate (CMP). This chain is 2-C-methyl-D-erythritol 2,4-cyclodiphosphate synthase, found in Escherichia coli O127:H6 (strain E2348/69 / EPEC).